Reading from the N-terminus, the 436-residue chain is DNA-dependent metalloprotease SPRTN (436 aa).

Residues Ile-19–Ile-186 enclose the SprT-like domain. A Zn(2+)-binding site is contributed by His-85. Glu-86 is an active-site residue. The Zn(2+) site is built by His-89 and His-104. Positions Val-184–Lys-219 are disordered. The SHP-box signature appears at Phe-231–Phe-239. A PIP-box motif is present at residues Gln-271–Leu-277. Residues Gly-300–Lys-321 are disordered. The segment at Lys-408 to Asn-435 adopts a UBZ4-type zinc-finger fold. Residues Cys-411, Cys-414, His-426, and Cys-430 each coordinate Zn(2+).

The protein belongs to the Spartan family. In terms of assembly, homodimer. Zn(2+) is required as a cofactor. Post-translationally, autocatalytically cleaved in response to double-stranded DNA-binding: autocatalytic cleavage takes place in trans and leads to inactivation.

It is found in the nucleus. Its subcellular location is the chromosome. Its activity is regulated as follows. DNA-binding activates the protease activity: single-stranded DNA-binding specifically activates ability to cleave covalent DNA-protein cross-links (DPCs). In contrast, double-stranded DNA-binding specifically activates autocatalytic cleavage, and subsequent inactivation. DNA-dependent metalloendopeptidase that mediates the proteolytic cleavage of covalent DNA-protein cross-links (DPCs) during DNA synthesis, thereby playing a key role in maintaining genomic integrity. DPCs are highly toxic DNA lesions that interfere with essential chromatin transactions, such as replication and transcription, and which are induced by reactive agents, such as UV light or formaldehyde. Associates with the DNA replication machinery and specifically removes DPCs during DNA synthesis. Catalyzes proteolytic cleavage of the hmces DNA-protein cross-link following unfolding by the brip1/fancj helicase. Acts as a pleiotropic protease for DNA-binding proteins cross-linked with DNA, such as top1, top2a, histones H3 and H4. Mediates degradation of DPCs that are not ubiquitinated, while it is not able to degrade ubiquitinated DPCs. SPRTN activation requires polymerase collision with DPCs followed by helicase bypass of DPCs. May also act as a 'reader' of ubiquitinated pcna: facilitates chromatin association of rad18 and is required for efficient pcna monoubiquitination, promoting a feed-forward loop to enhance pcna ubiquitination and translesion DNA synthesis. Acts as a regulator of translesion DNA synthesis by recruiting vcp/p97 to sites of DNA damage. The protein is DNA-dependent metalloprotease SPRTN of Xenopus tropicalis (Western clawed frog).